The primary structure comprises 76 residues: Sec-independent protein translocase protein TatA (76 aa).

A helical transmembrane segment spans residues 1–21 (MGGLSIWHWLIVLLIVALVFG). The interval 40-76 (KDGMKEGETPADAQQLPRSGAVDVNAKETTRSDSNKA) is disordered. Residues 64–76 (NAKETTRSDSNKA) show a composition bias toward basic and acidic residues.

Belongs to the TatA/E family. The Tat system comprises two distinct complexes: a TatABC complex, containing multiple copies of TatA, TatB and TatC subunits, and a separate TatA complex, containing only TatA subunits. Substrates initially bind to the TatABC complex, which probably triggers association of the separate TatA complex to form the active translocon.

The protein resides in the cell inner membrane. Its function is as follows. Part of the twin-arginine translocation (Tat) system that transports large folded proteins containing a characteristic twin-arginine motif in their signal peptide across membranes. TatA could form the protein-conducting channel of the Tat system. In Burkholderia cenocepacia (strain HI2424), this protein is Sec-independent protein translocase protein TatA.